The primary structure comprises 97 residues: Aspartyl/glutamyl-tRNA(Asn/Gln) amidotransferase subunit C (97 aa).

The protein belongs to the GatC family. Heterotrimer of A, B and C subunits.

It carries out the reaction L-glutamyl-tRNA(Gln) + L-glutamine + ATP + H2O = L-glutaminyl-tRNA(Gln) + L-glutamate + ADP + phosphate + H(+). The enzyme catalyses L-aspartyl-tRNA(Asn) + L-glutamine + ATP + H2O = L-asparaginyl-tRNA(Asn) + L-glutamate + ADP + phosphate + 2 H(+). In terms of biological role, allows the formation of correctly charged Asn-tRNA(Asn) or Gln-tRNA(Gln) through the transamidation of misacylated Asp-tRNA(Asn) or Glu-tRNA(Gln) in organisms which lack either or both of asparaginyl-tRNA or glutaminyl-tRNA synthetases. The reaction takes place in the presence of glutamine and ATP through an activated phospho-Asp-tRNA(Asn) or phospho-Glu-tRNA(Gln). This Listeria monocytogenes serotype 4b (strain CLIP80459) protein is Aspartyl/glutamyl-tRNA(Asn/Gln) amidotransferase subunit C.